We begin with the raw amino-acid sequence, 206 residues long: Ribosomal RNA small subunit methyltransferase G (206 aa).

S-adenosyl-L-methionine is bound by residues Gly-74, Leu-79, 125–126, and Arg-140; that span reads VE.

The protein belongs to the methyltransferase superfamily. RNA methyltransferase RsmG family.

Its subcellular location is the cytoplasm. The catalysed reaction is guanosine(527) in 16S rRNA + S-adenosyl-L-methionine = N(7)-methylguanosine(527) in 16S rRNA + S-adenosyl-L-homocysteine. Specifically methylates the N7 position of guanine in position 527 of 16S rRNA. The polypeptide is Ribosomal RNA small subunit methyltransferase G (Shewanella woodyi (strain ATCC 51908 / MS32)).